A 147-amino-acid chain; its full sequence is Hemoglobin subunit gamma (147 aa).

Residues 3 to 147 (HFTAEEKAAI…VANALAYKYH (145 aa)) enclose the Globin domain. H64 and H93 together coordinate heme b.

This sequence belongs to the globin family. As to quaternary structure, heterotetramer of two alpha chains and two gamma chains in fetal hemoglobin (Hb F). As to expression, red blood cells.

Functionally, gamma chains make up the fetal hemoglobin F, in combination with alpha chains. This Elephas maximus (Indian elephant) protein is Hemoglobin subunit gamma (HBG).